A 121-amino-acid polypeptide reads, in one-letter code: Surface glycoprotein CD59 homolog (121 aa).

Residues 1 to 19 (MYILFTLVLTFVFCKPIHS) form the signal peptide. One can recognise a UPAR/Ly6 domain in the interval 20 to 104 (LQCYNCSHST…ENIKRTISDK (85 aa)). Disulfide bonds link Cys22-Cys45, Cys25-Cys32, Cys38-Cys58, Cys64-Cys82, and Cys83-Cys88. A glycan (N-linked (GlcNAc...) asparagine; by host) is linked at Asn24. The GPI-anchor amidated asparagine; by host moiety is linked to residue Asn96. Positions 97–121 (IKRTISDKALLLLALFLVTAWNFPL) are cleaved as a propeptide — removed in mature form.

The protein resides in the host cell membrane. The chain is Surface glycoprotein CD59 homolog (15) from Saimiriine herpesvirus 2 (strain 11) (SaHV-2).